The chain runs to 350 residues: Quercetin 2,3-dioxygenase (350 aa).

Positions 1–145 are cupin 1; it reads DTSSLIVEDA…FYYLGTNATD (145 aa). Cu cation is bound by residues His66, His68, and Glu73. Substrate is bound at residue His66. Glu73 is a substrate binding site. N-linked (GlcNAc...) asparagine glycosylation is found at Asn90 and Asn109. A Cu cation-binding site is contributed by His112. Residue Asn142 is glycosylated (N-linked (GlcNAc...) asparagine). The tract at residues 146–205 is linker; that stretch reads TTHTPYIPSSSDSSSTTGPDSSTISTLQSFDVYAELSFTPRTDTVNGTAPANTVWHTGAN. The disordered stretch occupies residues 148–167; it reads HTPYIPSSSDSSSTTGPDSS. Positions 152-167 are enriched in low complexity; it reads IPSSSDSSSTTGPDSS. Asn191 and Asn248 each carry an N-linked (GlcNAc...) asparagine glycan. The cupin 2 stretch occupies residues 206–350; that stretch reads ALASTAGDPY…WSSVSFPADW (145 aa).

In terms of assembly, homodimer. Requires Cu cation as cofactor. The N-linked glycan at Asn-191 consists of Man(5)-GlcNAc(2).

It carries out the reaction quercetin + O2 = 2-(3,4-dihydroxybenzoyloxy)-4,6-dihydroxybenzoate + CO. The protein operates within flavonoid metabolism; quercetin degradation. Inhibited by diethyldithiocarbamate and kojic acid. Performs the first step in the degradation of the flavonoid quercetin by a dioxygenase reaction. The enzyme catalyzes the cleavage of the O-heteroaromatic ring of the flavonol quercetin yielding the depside 2-protocatechuoyl-phloroglucinol carboxylic acid and carbon monoxide. This involves the remarkable dioxygenolytic cleavage of two carbon-carbon bonds. This is Quercetin 2,3-dioxygenase from Aspergillus japonicus.